The chain runs to 841 residues: Envelope glycoprotein H (841 aa).

Positions 1-17 (MFALVLAVVILPLWTTA) are cleaved as a signal peptide. N18, N45, and N217 each carry an N-linked (GlcNAc...) asparagine; by host glycan. Over 18–802 (NKSYVTPTPA…ERRQAIRMSG (785 aa)) the chain is Virion surface. The interaction with gL stretch occupies residues 246–309 (DSGRVEVNIG…DPGPSYRVYL (64 aa)). Residues N317, N499, N522, N760, and N783 are each glycosylated (N-linked (GlcNAc...) asparagine; by host). The helical transmembrane segment at 803 to 823 (QYLGASLGGAFLAVVGFGIIG) threads the bilayer. Residues 824–841 (WMLCGNSRLREYNKIPLT) are Intravirion-facing.

Belongs to the herpesviridae glycoprotein H family. As to quaternary structure, interacts with glycoprotein L (gL); this interaction is necessary for the correct processing and cell surface expression of gH. The heterodimer gH/gL seems to interact with gB trimers during fusion. Post-translationally, N-glycosylated, O-glycosylated, and sialylated.

The protein resides in the virion membrane. It is found in the host cell membrane. It localises to the host endosome membrane. In terms of biological role, the heterodimer glycoprotein H-glycoprotein L is required for the fusion of viral and plasma membranes leading to virus entry into the host cell. Following initial binding to host receptor, membrane fusion is mediated by the fusion machinery composed of gB and the heterodimer gH/gL. May also be involved in the fusion between the virion envelope and the outer nuclear membrane during virion morphogenesis. The chain is Envelope glycoprotein H from Varicella-zoster virus (strain Oka vaccine) (HHV-3).